Here is a 117-residue protein sequence, read N- to C-terminus: Large ribosomal subunit protein bL20c (117 aa).

Belongs to the bacterial ribosomal protein bL20 family.

Its subcellular location is the plastid. The protein resides in the chloroplast. Functionally, binds directly to 23S ribosomal RNA and is necessary for the in vitro assembly process of the 50S ribosomal subunit. It is not involved in the protein synthesizing functions of that subunit. This is Large ribosomal subunit protein bL20c from Eucalyptus globulus subsp. globulus (Tasmanian blue gum).